A 230-amino-acid polypeptide reads, in one-letter code: Capsid protein (230 aa).

The segment covering 19–48 has biased composition (low complexity); sequence PPTSDAASPSADQPAVSSSRSDSRLVSAPL. Residues 19–54 are disordered; the sequence is PPTSDAASPSADQPAVSSSRSDSRLVSAPLPAAPPA.

It belongs to the tymoviruses capsid protein family.

The protein resides in the virion. Self-assembles to form a T=3 icosahedral capsid composed of 180 copies of the capsid protein. The capsid encapsulates the single-stranded RNA genome. The protein is Capsid protein of Grapevine fleck virus (isolate Italy/MT48) (GFkV).